A 417-amino-acid polypeptide reads, in one-letter code: Transcobalamin-1 (417 aa).

An N-terminal signal peptide occupies residues 1-25; that stretch reads MRQSHQLPLVGLLLFSLIPSQLCQS. The globular N-terminal alpha domain stretch occupies residues 24–308; sequence QSCVVSEKDY…DVTKLLLVPK (285 aa). Residue asparagine 90 is glycosylated (N-linked (GlcNAc...) asparagine). 143–147 is a cyanocob(III)alamin binding site; the sequence is TNYYQ. Residues cysteine 156 and cysteine 198 are joined by a disulfide bond. 3 N-linked (GlcNAc...) asparagine glycosylation sites follow: asparagine 161, asparagine 166, and asparagine 179. Aspartate 187 and glutamine 287 together coordinate cyanocob(III)alamin. Positions 309 to 327 are flexible linker; sequence VQVNITDEPVPVVPTLSPE. Asparagine 312, asparagine 328, asparagine 345, and asparagine 360 each carry an N-linked (GlcNAc...) asparagine glycan. Residues 328-417 are globular C-terminal beta domain; sequence NISVIYCVKI…GIMLSKMESI (90 aa). Residues 376-377 and 393-395 contribute to the cyanocob(III)alamin site; these read YI and WEH.

It belongs to the eukaryotic cobalamin transport proteins family. Post-translationally, contains about 30% carbohydrates. As to expression, haptocorrins are a family of cobalamin-binding glycoproteins found in blood, salivary and mucosal secretions.

The protein resides in the secreted. Binds vitamin B12 with femtomolar affinity and protects it from the acidic environment of the stomach. Binds to cobalamin and to cobalamin analogs such as cobinamide. The sequence is that of Transcobalamin-1 (TCN1) from Sus scrofa (Pig).